The following is a 138-amino-acid chain: uncharacterized protein (138 aa).

Its subcellular location is the plastid. It localises to the chloroplast. This is an uncharacterized protein from Chlorella vulgaris (Green alga).